Reading from the N-terminus, the 199-residue chain is uncharacterized protein (199 aa).

A helical membrane pass occupies residues 7-27 (FWFWLILGIIALFIIVKAIVI).

It belongs to the band 7/mec-2 family.

The protein localises to the membrane. This is an uncharacterized protein from Methanocaldococcus jannaschii (strain ATCC 43067 / DSM 2661 / JAL-1 / JCM 10045 / NBRC 100440) (Methanococcus jannaschii).